Here is a 929-residue protein sequence, read N- to C-terminus: Protocadherin gamma-B7 (929 aa).

The signal sequence occupies residues 1–30 (MGGSCAQRRRAGPRQVLFPLLLPLFYPTLC). Cadherin domains follow at residues 31-133 (EPIR…APQF), 134-242 (RKDE…PPVF), 243-347 (SQDV…SPEI), 348-452 (IITS…APVF), 453-562 (GQSA…APRV), and 570-675 (DGSA…LPDF). Residues 31 to 691 (EPIRYSIPEE…SDSQAEMQFY (661 aa)) lie on the Extracellular side of the membrane. 2 N-linked (GlcNAc...) asparagine glycosylation sites follow: asparagine 419 and asparagine 545. Residues 692 to 712 (LVVALALISVLFLLAVILAIA) traverse the membrane as a helical segment. Residues 713 to 929 (LRLRQSFSPT…KKKSGKKEKK (217 aa)) are Cytoplasmic-facing. Disordered regions lie at residues 806 to 838 (QAPPNTDWRFSQAQRPGTSGSQNGDDTGTWPNN) and 899 to 929 (ATLTNAAGKRDGKAPAGGNGNKKKSGKKEKK). A compositionally biased stretch (polar residues) spans 807-838 (APPNTDWRFSQAQRPGTSGSQNGDDTGTWPNN). Over residues 919–929 (NKKKSGKKEKK) the composition is skewed to basic residues.

Its subcellular location is the cell membrane. Potential calcium-dependent cell-adhesion protein. May be involved in the establishment and maintenance of specific neuronal connections in the brain. This chain is Protocadherin gamma-B7 (PCDHGB7), found in Homo sapiens (Human).